The sequence spans 401 residues: Jumonji C domain-containing protein 5 (401 aa).

Residues 255–401 (EYLAQHELFA…PSFSVSFWWE (147 aa)) enclose the JmjC domain. Fe cation is bound by residues H306, D308, and H385.

Fe(2+) is required as a cofactor. In terms of tissue distribution, expressed in neurons close to the dorsal lateral neurons involved in circadian rhythm.

The protein resides in the nucleus. It localises to the nucleoplasm. Its subcellular location is the cytoplasm. The enzyme catalyses L-arginyl-[protein] + 2-oxoglutarate + O2 = (3R)-3-hydroxy-L-arginyl-[protein] + succinate + CO2. Bifunctional enzyme that acts both as an endopeptidase and 2-oxoglutarate-dependent monooxygenase. May be involved in regulation of behavior and circadian rhythms. This is Jumonji C domain-containing protein 5 from Drosophila melanogaster (Fruit fly).